Consider the following 63-residue polypeptide: Cytochrome c oxidase subunit 5C (63 aa).

A helical membrane pass occupies residues 16-34; the sequence is VVKEICIGLTLGLVAGGLW.

This sequence belongs to the cytochrome c oxidase subunit 5C family.

It localises to the mitochondrion inner membrane. This protein is one of the nuclear-coded polypeptide chains of cytochrome c oxidase, the terminal oxidase in mitochondrial electron transport. The chain is Cytochrome c oxidase subunit 5C (COX5C) from Oryza sativa subsp. japonica (Rice).